Here is a 248-residue protein sequence, read N- to C-terminus: Sugar fermentation stimulation protein homolog (248 aa).

It belongs to the SfsA family.

This Methylorubrum extorquens (strain CM4 / NCIMB 13688) (Methylobacterium extorquens) protein is Sugar fermentation stimulation protein homolog.